Here is a 634-residue protein sequence, read N- to C-terminus: 1-deoxy-D-xylulose-5-phosphate synthase (634 aa).

Thiamine diphosphate is bound by residues His-74 and Ala-115 to Ser-117. Residue Asp-146 coordinates Mg(2+). Thiamine diphosphate is bound by residues Gly-147–Ala-148, Asn-176, Tyr-283, and Glu-365. Asn-176 contributes to the Mg(2+) binding site.

Belongs to the transketolase family. DXPS subfamily. In terms of assembly, homodimer. Mg(2+) is required as a cofactor. The cofactor is thiamine diphosphate.

The enzyme catalyses D-glyceraldehyde 3-phosphate + pyruvate + H(+) = 1-deoxy-D-xylulose 5-phosphate + CO2. The protein operates within metabolic intermediate biosynthesis; 1-deoxy-D-xylulose 5-phosphate biosynthesis; 1-deoxy-D-xylulose 5-phosphate from D-glyceraldehyde 3-phosphate and pyruvate: step 1/1. Functionally, catalyzes the acyloin condensation reaction between C atoms 2 and 3 of pyruvate and glyceraldehyde 3-phosphate to yield 1-deoxy-D-xylulose-5-phosphate (DXP). The polypeptide is 1-deoxy-D-xylulose-5-phosphate synthase (Burkholderia mallei (strain ATCC 23344)).